Reading from the N-terminus, the 461-residue chain is Ornithine decarboxylase (461 aa).

N6-(pyridoxal phosphate)lysine is present on Lys69. Pyridoxal 5'-phosphate contacts are provided by residues Ser200, Gly237, and 274 to 277 (EPGR). Phosphoserine; by CK2 is present on Ser303. Substrate is bound at residue 331–332 (YD). Catalysis depends on Cys360, which acts as the Proton donor; shared with dimeric partner. Cys360 bears the S-nitrosocysteine; in inhibited form mark. Position 361 (Asp361) interacts with substrate. A pyridoxal 5'-phosphate-binding site is contributed by Tyr389.

This sequence belongs to the Orn/Lys/Arg decarboxylase class-II family. Homodimer. Only the dimer is catalytically active, as the active sites are constructed of residues from both monomers. Does not form a heterodimer with AZIN2. The cofactor is pyridoxal 5'-phosphate. S-Nitrosylation inhibits the enzyme. S-Nitrosylated in vitro on 4 cysteine residues.

It catalyses the reaction L-ornithine + H(+) = putrescine + CO2. It participates in amine and polyamine biosynthesis; putrescine biosynthesis via L-ornithine pathway; putrescine from L-ornithine: step 1/1. With respect to regulation, inhibited by S-nitrosylation. Inhibited by antizymes (AZs) OAZ1, OAZ2 and OAZ3 in response to polyamine levels. AZs inhibit the assembly of the functional homodimer by binding to ODC monomers. Additionally, OAZ1 targets ODC monomers for ubiquitin-independent proteolytic destruction by the 26S proteasome. Inhibited by 1-amino-oxy-3-aminopropane (APA, an isosteric analog of putrescine). Irreversibly inhibited by alpha-difluoromethylornithine (DFMO). Catalyzes the first and rate-limiting step of polyamine biosynthesis that converts ornithine into putrescine, which is the precursor for the polyamines, spermidine and spermine. Polyamines are essential for cell proliferation and are implicated in cellular processes, ranging from DNA replication to apoptosis. This is Ornithine decarboxylase (ODC1) from Homo sapiens (Human).